The following is a 457-amino-acid chain: uncharacterized protein (457 aa).

2 consecutive transmembrane segments (helical) span residues 1–21 and 250–270; these read MVSS…MTLL and ILIV…ATTF.

The protein localises to the membrane. This is an uncharacterized protein from Saccharomyces cerevisiae (strain ATCC 204508 / S288c) (Baker's yeast).